The primary structure comprises 76 residues: Acyl carrier protein (76 aa).

Positions 1–76 constitute a Carrier domain; that stretch reads MALLDDVKAV…DAIKYIENNA (76 aa). Position 36 is an O-(pantetheine 4'-phosphoryl)serine (Ser36).

The protein belongs to the acyl carrier protein (ACP) family. In terms of processing, 4'-phosphopantetheine is transferred from CoA to a specific serine of apo-ACP by AcpS. This modification is essential for activity because fatty acids are bound in thioester linkage to the sulfhydryl of the prosthetic group.

Its subcellular location is the cytoplasm. The protein operates within lipid metabolism; fatty acid biosynthesis. In terms of biological role, carrier of the growing fatty acid chain in fatty acid biosynthesis. The sequence is that of Acyl carrier protein from Aliarcobacter butzleri (strain RM4018) (Arcobacter butzleri).